A 316-amino-acid chain; its full sequence is Protease HtpX homolog (316 aa).

The helical transmembrane segment at 16–36 threads the bilayer; it reads LFMGAGFLIGGATGMMIALVF. His-134 provides a ligand contact to Zn(2+). Residue Glu-135 is part of the active site. His-138 contributes to the Zn(2+) binding site. The next 2 helical transmembrane spans lie at 149–169 and 180–200; these read VTATIAGAISALANFAFFFGG and LGGMIGAILIAILAPIAAMLV. Glu-209 is a binding site for Zn(2+). The segment at 295-316 is disordered; sequence PVMAATTSSSVPLSGERGGPWS.

The protein belongs to the peptidase M48B family. The cofactor is Zn(2+).

The protein resides in the cell inner membrane. The polypeptide is Protease HtpX homolog (Caulobacter vibrioides (strain ATCC 19089 / CIP 103742 / CB 15) (Caulobacter crescentus)).